We begin with the raw amino-acid sequence, 102 residues long: Aspartyl/glutamyl-tRNA(Asn/Gln) amidotransferase subunit C (102 aa).

The protein belongs to the GatC family. As to quaternary structure, heterotrimer of A, B and C subunits.

The catalysed reaction is L-glutamyl-tRNA(Gln) + L-glutamine + ATP + H2O = L-glutaminyl-tRNA(Gln) + L-glutamate + ADP + phosphate + H(+). It catalyses the reaction L-aspartyl-tRNA(Asn) + L-glutamine + ATP + H2O = L-asparaginyl-tRNA(Asn) + L-glutamate + ADP + phosphate + 2 H(+). Allows the formation of correctly charged Asn-tRNA(Asn) or Gln-tRNA(Gln) through the transamidation of misacylated Asp-tRNA(Asn) or Glu-tRNA(Gln) in organisms which lack either or both of asparaginyl-tRNA or glutaminyl-tRNA synthetases. The reaction takes place in the presence of glutamine and ATP through an activated phospho-Asp-tRNA(Asn) or phospho-Glu-tRNA(Gln). This chain is Aspartyl/glutamyl-tRNA(Asn/Gln) amidotransferase subunit C, found in Bordetella avium (strain 197N).